Here is a 178-residue protein sequence, read N- to C-terminus: Stage V sporulation protein T (178 aa).

Residues 5–51 (GIVRRIDDLGRVVIPKEIRRTLRIREGDPLEIFVDRDGEVILKKYSP) form the SpoVT-AbrB domain. Residues 56-178 (GDFAKEYADA…AGFLARQMEQ (123 aa)) are GAF-like.

To B.subtilis AbrB and Abh. In terms of assembly, homotetramer. Two monomers dimerize via their N-terminal swapped-hairpin domains. These dimers further associate into tetramers through helical interactions between their C-terminal GAF-like domains.

Functionally, transcriptional factor that positively regulates or negatively the expression of a large number of forespore-specific sigma G-dependent genes. May provide a mechanism of feedback control that is important for forespore development. SpoVT levels during spore formation have a major impact on the germination and the resistance of the resultant spores. This is Stage V sporulation protein T from Bacillus subtilis (strain 168).